We begin with the raw amino-acid sequence, 167 residues long: Protein-lysine myristoyltransferase RtxC (167 aa).

Active-site residues include His-20 and Asp-89.

This sequence belongs to the RTX toxin acyltransferase family.

The protein localises to the cytoplasm. It catalyses the reaction tetradecanoyl-[ACP] + L-lysyl-[protein] = N(6)-tetradecanoyl-L-lysyl-[protein] + holo-[ACP] + H(+). Functionally, protein-lysine myristoyltransferase that catalyzes myristoylation of the protoxin (RtxA) at two internal lysine residues, thereby converting it to the active toxin. The sequence is that of Protein-lysine myristoyltransferase RtxC from Kingella kingae.